We begin with the raw amino-acid sequence, 447 residues long: UDP-N-acetylmuramoylalanine--D-glutamate ligase (447 aa).

112-118 (GTNGKST) is a binding site for ATP.

Belongs to the MurCDEF family.

The protein resides in the cytoplasm. It catalyses the reaction UDP-N-acetyl-alpha-D-muramoyl-L-alanine + D-glutamate + ATP = UDP-N-acetyl-alpha-D-muramoyl-L-alanyl-D-glutamate + ADP + phosphate + H(+). It functions in the pathway cell wall biogenesis; peptidoglycan biosynthesis. Cell wall formation. Catalyzes the addition of glutamate to the nucleotide precursor UDP-N-acetylmuramoyl-L-alanine (UMA). This chain is UDP-N-acetylmuramoylalanine--D-glutamate ligase, found in Legionella pneumophila (strain Paris).